The primary structure comprises 287 residues: Large ribosomal subunit protein uL2 (287 aa).

The segment at R221–S287 is disordered. Positions L271–S287 are enriched in basic residues.

It belongs to the universal ribosomal protein uL2 family. As to quaternary structure, part of the 50S ribosomal subunit. Forms a bridge to the 30S subunit in the 70S ribosome.

Functionally, one of the primary rRNA binding proteins. Required for association of the 30S and 50S subunits to form the 70S ribosome, for tRNA binding and peptide bond formation. It has been suggested to have peptidyltransferase activity; this is somewhat controversial. Makes several contacts with the 16S rRNA in the 70S ribosome. The protein is Large ribosomal subunit protein uL2 of Synechococcus sp. (strain CC9605).